Consider the following 101-residue polypeptide: Rho GTPase-activating protein 39 (101 aa).

The Rho-GAP domain maps to 1 to 96 (YEQCIAHYES…VLIQHLDTSF (96 aa)).

In terms of tissue distribution, preoptic area and testis.

In Rattus norvegicus (Rat), this protein is Rho GTPase-activating protein 39 (Arhgap39).